The primary structure comprises 271 residues: Energy-coupling factor transporter ATP-binding protein EcfA (271 aa).

One can recognise an ABC transporter domain in the interval 2 to 231; the sequence is ISIQNLTFYY…PLFLQQYKLN (230 aa). 34 to 41 lines the ATP pocket; the sequence is GHNGSGKS.

This sequence belongs to the ABC transporter superfamily. Energy-coupling factor EcfA family. As to quaternary structure, forms a stable energy-coupling factor (ECF) transporter complex composed of 2 membrane-embedded substrate-binding proteins (S component), 2 ATP-binding proteins (A component) and 2 transmembrane proteins (T component).

The protein resides in the cell membrane. Functionally, ATP-binding (A) component of a common energy-coupling factor (ECF) ABC-transporter complex. Unlike classic ABC transporters this ECF transporter provides the energy necessary to transport a number of different substrates. The chain is Energy-coupling factor transporter ATP-binding protein EcfA from Onion yellows phytoplasma (strain OY-M).